The sequence spans 580 residues: Type 3 secretion system translocon protein SctE (580 aa).

Helical transmembrane passes span 313 to 333 (ILGALLTIVSVVAAAFSGGAS) and 399 to 419 (IGSILGAIAGALVLVAAVVLV).

It belongs to the SctE/SipB/YopB family. The core secretion machinery of the T3SS is composed of approximately 20 different proteins, including cytoplasmic components, a base, an export apparatus and a needle. This subunit is involved in the formation of a pore, called the translocon, in host membrane.

It localises to the secreted. The protein localises to the host membrane. Component of the type III secretion system (T3SS), also called injectisome, which is used to inject bacterial effector proteins into eukaryotic host cells. IpaB/SctE and IpaC/SctB are inserted into the host membrane where they form a pore and allow the translocation of effector proteins into the cytosol of target cells. This chain is Type 3 secretion system translocon protein SctE, found in Shigella dysenteriae.